The following is a 129-amino-acid chain: MTVVGAVLPELKLYGDPTFIVSTALATRDFQDVHHDRDKAVAQGSKDIFVNILTDTGLVQRYVTDWAGPSALIKSIGLRLGVPWYAYDTVTFSGEVTAVNDGLITVKVVGRNTLGDHVTATVELSMRDS.

The protein belongs to the thioester dehydratase family. Heterodimer composed of ChsH1 and ChsH2. Two heterodimers combine to form a heterotetramer. The complex interacts with Ltp2 via the DUF35 C-terminal region of ChsH2. The ChsH1-ChsH2-Ltp2 protein complex is composed of two protomers that form a heterohexameric structure through the Ltp2 dimerization interface.

It catalyses the reaction 3-oxochola-4,17-dien-22-oyl-CoA + H2O = 17-hydroxy-3-oxochol-4-en-22-oyl-CoA. The enzyme catalyses (2E)-octenoyl-CoA + H2O = 3-hydroxyoctanoyl-CoA. The catalysed reaction is (2E)-decenoyl-CoA + H2O = 3-hydroxydecanoyl-CoA. It participates in steroid metabolism; cholesterol degradation. With respect to regulation, in the absence of the Ltp2 aldolase, ChsH1/ChsH2 can hydrate only about 30% of the 3-OPDC-CoA substrate. Complete turnover requires the presence of Ltp2. Involved in cholesterol side chain degradation. Catalyzes the hydration of 3-oxo-4,17-pregnadiene-20-carboxyl-CoA (3-OPDC-CoA) to form 17-hydroxy-3-oxo-4-pregnene-20-carboxyl-CoA (17-HOPC-CoA), in the modified beta-oxidation pathway for cholesterol side chain degradation. Can also use octenoyl-CoA and decenoyl-CoA, with lower efficiency. The sequence is that of 3-oxo-4,17-pregnadiene-20-carboxyl-CoA hydratase beta subunit from Mycobacterium tuberculosis (strain ATCC 25618 / H37Rv).